Reading from the N-terminus, the 406-residue chain is Putative cfxQ-like protein R730 (406 aa).

Positions Met-1–Lys-37 are disordered. Residues Asn-13–Pro-32 show a composition bias toward low complexity. Gly-173–Ser-180 contacts ATP.

This sequence belongs to the CbxX/CfxQ family.

The chain is Putative cfxQ-like protein R730 from Acanthamoeba polyphaga mimivirus (APMV).